Reading from the N-terminus, the 397-residue chain is Nicotinate phosphoribosyltransferase (397 aa).

His221 is modified (phosphohistidine; by autocatalysis).

The protein belongs to the NAPRTase family. Transiently phosphorylated on a His residue during the reaction cycle. Phosphorylation strongly increases the affinity for substrates and increases the rate of nicotinate D-ribonucleotide production. Dephosphorylation regenerates the low-affinity form of the enzyme, leading to product release.

The enzyme catalyses nicotinate + 5-phospho-alpha-D-ribose 1-diphosphate + ATP + H2O = nicotinate beta-D-ribonucleotide + ADP + phosphate + diphosphate. It functions in the pathway cofactor biosynthesis; NAD(+) biosynthesis; nicotinate D-ribonucleotide from nicotinate: step 1/1. In terms of biological role, catalyzes the synthesis of beta-nicotinate D-ribonucleotide from nicotinate and 5-phospho-D-ribose 1-phosphate at the expense of ATP. The protein is Nicotinate phosphoribosyltransferase of Herminiimonas arsenicoxydans.